Reading from the N-terminus, the 31-residue chain is Photosystem II reaction center protein T (31 aa).

Residues Ser-3–Leu-23 traverse the membrane as a helical segment.

The protein belongs to the PsbT family. As to quaternary structure, PSII is composed of 1 copy each of membrane proteins PsbA, PsbB, PsbC, PsbD, PsbE, PsbF, PsbH, PsbI, PsbJ, PsbK, PsbL, PsbM, PsbT, PsbX, PsbY, PsbZ, Psb30/Ycf12, peripheral proteins PsbO, CyanoQ (PsbQ), PsbU, PsbV and a large number of cofactors. It forms dimeric complexes.

Its subcellular location is the cellular thylakoid membrane. In terms of biological role, found at the monomer-monomer interface of the photosystem II (PS II) dimer, plays a role in assembly and dimerization of PSII. PSII is a light-driven water plastoquinone oxidoreductase, using light energy to abstract electrons from H(2)O, generating a proton gradient subsequently used for ATP formation. This chain is Photosystem II reaction center protein T, found in Synechococcus sp. (strain RCC307).